The chain runs to 585 residues: Arginine--tRNA ligase (585 aa).

A 'HIGH' region motif is present at residues 131–141; that stretch reads ANPTGPMHVGH.

It belongs to the class-I aminoacyl-tRNA synthetase family. Monomer.

The protein resides in the cytoplasm. It carries out the reaction tRNA(Arg) + L-arginine + ATP = L-arginyl-tRNA(Arg) + AMP + diphosphate. The polypeptide is Arginine--tRNA ligase (Bartonella henselae (strain ATCC 49882 / DSM 28221 / CCUG 30454 / Houston 1) (Rochalimaea henselae)).